Here is an 84-residue protein sequence, read N- to C-terminus: Putative UPF0320 protein YNL337W (84 aa).

It belongs to the UPF0320 family.

The protein is Putative UPF0320 protein YNL337W of Saccharomyces cerevisiae (strain ATCC 204508 / S288c) (Baker's yeast).